Reading from the N-terminus, the 278-residue chain is HTH-type transcriptional activator RhaS (278 aa).

The 99-residue stretch at 174-272 (NQLMAWLEDH…SWSPREIRQG (99 aa)) folds into the HTH araC/xylS-type domain. 2 DNA-binding regions (H-T-H motif) span residues 191–212 (ETVA…KQHT) and 239–262 (VTDI…RREF).

In terms of assembly, binds DNA as a dimer.

The protein resides in the cytoplasm. Functionally, activates expression of the rhaBAD and rhaT operons. This Enterobacter sp. (strain 638) protein is HTH-type transcriptional activator RhaS.